A 595-amino-acid polypeptide reads, in one-letter code: Elongation factor 4 (595 aa).

Residues 1-183 (MNVRNFSIIA…AIVERIPPPP (183 aa)) enclose the tr-type G domain. Residues 13–18 (DHGKST) and 130–133 (NKID) each bind GTP.

It belongs to the TRAFAC class translation factor GTPase superfamily. Classic translation factor GTPase family. LepA subfamily.

It localises to the cell membrane. It catalyses the reaction GTP + H2O = GDP + phosphate + H(+). Required for accurate and efficient protein synthesis under certain stress conditions. May act as a fidelity factor of the translation reaction, by catalyzing a one-codon backward translocation of tRNAs on improperly translocated ribosomes. Back-translocation proceeds from a post-translocation (POST) complex to a pre-translocation (PRE) complex, thus giving elongation factor G a second chance to translocate the tRNAs correctly. Binds to ribosomes in a GTP-dependent manner. In Deinococcus geothermalis (strain DSM 11300 / CIP 105573 / AG-3a), this protein is Elongation factor 4.